Consider the following 345-residue polypeptide: 2-oxoglutarate-dependent ethylene/succinate-forming enzyme (345 aa).

Positions 167–288 (GWHHMRVLRF…RFAMAYFHEP (122 aa)) constitute a Fe2OG dioxygenase domain. Fe cation-binding residues include His-191 and His-270.

The protein belongs to the iron/ascorbate-dependent oxidoreductase family. Monomer. The cofactor is Fe(2+).

It carries out the reaction 2-oxoglutarate + O2 + 2 H(+) = ethene + 3 CO2 + H2O. The catalysed reaction is L-arginine + 2-oxoglutarate + O2 = guanidine + L-glutamate 5-semialdehyde + succinate + CO2. It participates in alkene biosynthesis; ethylene biosynthesis via 2-oxoglutarate. Functionally, simultaneously catalyzes two reactions, namely formation of ethylene and of succinate from 2-oxoglutarate. The polypeptide is 2-oxoglutarate-dependent ethylene/succinate-forming enzyme (efe) (Ralstonia nicotianae (strain ATCC BAA-1114 / GMI1000) (Ralstonia solanacearum)).